The following is a 354-amino-acid chain: MLASSAVFRRQEFLIRCLGVGGQSQQFYRKSIPRTMALEADAENILRAITPTLDLARHKGQAGKIAVIGGCREYTGAPYFSAISALKIGADLSHVFCTKDAAPVIKSYSPELIVHPLLEESYSVREEDKKAISEKVLTEVVKWMERFDCLVVGPGLGRDPFLLGCVSEIMKHARQSNVPIVIDGDGLFLVTNSLDLVSGYPLAVLTPNVNEYKRLVQKVLNCEVGDQDAAEQLLSLAKGIGGVTILRKGKSDLISDGETVNSVGIYGSPRRCGGQGDILSGSVAVFLSWARQRIIAEGDLNISPKSPTVLGSIAGSALMRKAASLAFENKKRSTLTGDIIECLGRSLEDICPAK.

In terms of domain architecture, YjeF C-terminal spans 42–350; sequence AENILRAITP…ECLGRSLEDI (309 aa). (6S)-NADPHX is bound by residues G155 and 208–214; that span reads NVNEYKR. ATP-binding positions include 248 to 252 and 267 to 276; these read KGKSD and GSPRRCGGQG. Position 277 (D277) interacts with (6S)-NADPHX.

This sequence belongs to the NnrD/CARKD family. Mg(2+) serves as cofactor.

The enzyme catalyses (6S)-NADHX + ATP = ADP + phosphate + NADH + H(+). It catalyses the reaction (6S)-NADPHX + ATP = ADP + phosphate + NADPH + H(+). In terms of biological role, catalyzes the dehydration of the S-form of NAD(P)HX at the expense of ATP, which is converted to ADP. Together with NAD(P)HX epimerase, which catalyzes the epimerization of the S- and R-forms, the enzyme allows the repair of both epimers of NAD(P)HX, a damaged form of NAD(P)H that is a result of enzymatic or heat-dependent hydration. This is ATP-dependent (S)-NAD(P)H-hydrate dehydratase from Vitis vinifera (Grape).